Consider the following 248-residue polypeptide: Cyclin-Q (248 aa).

The residue at position 1 (Met-1) is an N-acetylmethionine. Positions 1–12 (MEAPEGGGGGPA) are enriched in gly residues. A disordered region spans residues 1–21 (MEAPEGGGGGPAARGPEGQPA).

Belongs to the cyclin family. Cyclin-like FAM58 subfamily. In terms of assembly, associates with CDK10 to promote its kinase activity. Interacts with SALL1.

Functionally, activating cyclin for the cyclin-associated kinase CDK10. This Homo sapiens (Human) protein is Cyclin-Q.